A 305-amino-acid chain; its full sequence is Homoserine kinase (305 aa).

Pro-93–Thr-103 provides a ligand contact to ATP.

Belongs to the GHMP kinase family. Homoserine kinase subfamily.

It is found in the cytoplasm. It catalyses the reaction L-homoserine + ATP = O-phospho-L-homoserine + ADP + H(+). It participates in amino-acid biosynthesis; L-threonine biosynthesis; L-threonine from L-aspartate: step 4/5. Functionally, catalyzes the ATP-dependent phosphorylation of L-homoserine to L-homoserine phosphate. The protein is Homoserine kinase of Trichodesmium erythraeum (strain IMS101).